We begin with the raw amino-acid sequence, 79 residues long: Short neurotoxin 3 (79 aa).

Positions 1–23 are cleaved as a signal peptide; that stretch reads MKTLLLTLVVMTIVCLDLGYTLT. 4 disulfides stabilise this stretch: Cys-24/Cys-41, Cys-34/Cys-59, Cys-63/Cys-71, and Cys-72/Cys-77.

Belongs to the three-finger toxin family. Short-chain subfamily. As to expression, expressed by the venom gland.

The protein localises to the secreted. The protein is Short neurotoxin 3 of Oxyuranus scutellatus scutellatus (Australian taipan).